Here is a 321-residue protein sequence, read N- to C-terminus: Fe-S cluster assembly protein DRE2 (321 aa).

Residues 1–131 (MERMLLLSPP…KPDFGPENIV (131 aa)) are N-terminal SAM-like domain. Residues 132–213 (PLKLGKRKPV…EETLLDGEDM (82 aa)) form a linker region. [2Fe-2S] cluster contacts are provided by Cys223, Cys234, Cys237, and Cys239. The fe-S binding site A stretch occupies residues 223–239 (CRPKAGKRRRACKDCTC). Cys284, Cys287, Cys295, and Cys298 together coordinate [4Fe-4S] cluster. Short sequence motifs (cx2C motif) lie at residues 284-287 (CGNC) and 295-298 (CDGC). The interval 284–298 (CGNCALGDAFRCDGC) is fe-S binding site B.

The protein belongs to the anamorsin family. Monomer. Interacts with TAH18. Interacts with MIA40. [2Fe-2S] cluster serves as cofactor. It depends on [4Fe-4S] cluster as a cofactor.

It is found in the cytoplasm. It localises to the mitochondrion intermembrane space. Component of the cytosolic iron-sulfur (Fe-S) protein assembly (CIA) machinery required for the maturation of extramitochondrial Fe-S proteins. Part of an electron transfer chain functioning in an early step of cytosolic Fe-S biogenesis, facilitating the de novo assembly of a [4Fe-4S] cluster on the scaffold complex CFD1-NBP35. Electrons are transferred to DRE2 from NADPH via the FAD- and FMN-containing protein TAH18. TAH18-DRE2 are also required for the assembly of the diferric tyrosyl radical cofactor of ribonucleotide reductase (RNR), probably by providing electrons for reduction during radical cofactor maturation in the catalytic small subunit RNR2. The chain is Fe-S cluster assembly protein DRE2 from Coccidioides posadasii (strain C735) (Valley fever fungus).